Consider the following 471-residue polypeptide: Eukaryotic translation initiation factor 3 subunit L (471 aa).

In terms of domain architecture, PCI spans 252 to 446 (DAIRMFSHIL…DLDYAMQGDL (195 aa)).

Belongs to the eIF-3 subunit L family.

It localises to the cytoplasm. In terms of biological role, component of the eukaryotic translation initiation factor 3 (eIF-3) complex, which is involved in protein synthesis of a specialized repertoire of mRNAs and, together with other initiation factors, stimulates binding of mRNA and methionyl-tRNAi to the 40S ribosome. The eIF-3 complex specifically targets and initiates translation of a subset of mRNAs involved in cell proliferation. In Pyricularia oryzae (strain Y34) (Rice blast fungus), this protein is Eukaryotic translation initiation factor 3 subunit L.